The sequence spans 292 residues: Putative FNIP repeat-containing protein L281 (292 aa).

Residues 95-134 form an FNIP repeat; the sequence is FNKSIDDIPSTITHLSLGAAFNGEVSNIPTSVTHLKLGVS.

The sequence is that of Putative FNIP repeat-containing protein L281 from Acanthamoeba polyphaga mimivirus (APMV).